Here is a 101-residue protein sequence, read N- to C-terminus: Large ribosomal subunit protein uL24 (101 aa).

This sequence belongs to the universal ribosomal protein uL24 family. Part of the 50S ribosomal subunit.

Its function is as follows. One of two assembly initiator proteins, it binds directly to the 5'-end of the 23S rRNA, where it nucleates assembly of the 50S subunit. One of the proteins that surrounds the polypeptide exit tunnel on the outside of the subunit. In Dinoroseobacter shibae (strain DSM 16493 / NCIMB 14021 / DFL 12), this protein is Large ribosomal subunit protein uL24.